We begin with the raw amino-acid sequence, 147 residues long: MVHFTAEEKAAITSIWDKVDLEKAGGETLGRLLIVYPWTQRFFEKFGNLSPPQAIMGNPRIRAHGKKVLTSLGLAVQNMDNLKETFAHLSELHCDKLHVDPENFKLLGNMLVIVLSSHLGKEFTAEVQAAWQKLVAAVANALSLKYH.

Residues 3 to 147 enclose the Globin domain; it reads HFTAEEKAAI…VANALSLKYH (145 aa). 2 residues coordinate heme b: histidine 64 and histidine 93.

Belongs to the globin family. In terms of assembly, heterotetramer of two alpha chains and two beta chains.

Its function is as follows. This is a minor early embryonic beta chain. This chain is Hemoglobin subunit beta-Y (HBBY), found in Mesocricetus auratus (Golden hamster).